Reading from the N-terminus, the 943-residue chain is Leucine--tRNA ligase (943 aa).

Positions 36–46 (PYPSGSMHVGH) match the 'HIGH' region motif. The 'KMSKS' region motif lies at 623-627 (KMSSS). Residues 910–943 (ASEVVIHTDPEEAPGPEDRKAGARPLRPGIWLEE) are disordered. The segment covering 915-930 (IHTDPEEAPGPEDRKA) has biased composition (basic and acidic residues).

The protein belongs to the class-I aminoacyl-tRNA synthetase family.

The protein localises to the cytoplasm. It catalyses the reaction tRNA(Leu) + L-leucine + ATP = L-leucyl-tRNA(Leu) + AMP + diphosphate. In Methanopyrus kandleri (strain AV19 / DSM 6324 / JCM 9639 / NBRC 100938), this protein is Leucine--tRNA ligase.